We begin with the raw amino-acid sequence, 321 residues long: Large ribosomal subunit protein uL10 (321 aa).

The segment at 284–321 (SAGTAPTGGGAAAAAVEEKKEEPEEESDDDIGFSLFDD) is disordered. Acidic residues predominate over residues 306–321 (PEEESDDDIGFSLFDD).

It belongs to the universal ribosomal protein uL10 family. P0 forms a pentameric complex by interaction with dimers of P1 and P2. In terms of processing, phosphorylated.

Functionally, ribosomal protein P0 is the functional equivalent of E.coli protein L10. The protein is Large ribosomal subunit protein uL10 of Oxybasis rubra (Red goosefoot).